The primary structure comprises 249 residues: Hydroxyacylglutathione hydrolase (249 aa).

The Zn(2+) site is built by H53, H55, D57, H58, H110, D127, and H165.

The protein belongs to the metallo-beta-lactamase superfamily. Glyoxalase II family. Monomer. Zn(2+) serves as cofactor.

The enzyme catalyses an S-(2-hydroxyacyl)glutathione + H2O = a 2-hydroxy carboxylate + glutathione + H(+). It functions in the pathway secondary metabolite metabolism; methylglyoxal degradation; (R)-lactate from methylglyoxal: step 2/2. Functionally, thiolesterase that catalyzes the hydrolysis of S-D-lactoyl-glutathione to form glutathione and D-lactic acid. The protein is Hydroxyacylglutathione hydrolase of Hamiltonella defensa subsp. Acyrthosiphon pisum (strain 5AT).